A 308-amino-acid polypeptide reads, in one-letter code: Ceramide synthase 1 LOH3 (308 aa).

6 consecutive transmembrane segments (helical) span residues 25–45 (VLPLFAVFFPSIRFLLDRFVF), 82–102 (CVYYLSAEILALSVTYNEPWF), 128–148 (LLYMFVAGFYTYSIFALVFWE), 154–174 (FGVSMGHHIATLILIVLSYVC), 213–233 (FILFVLSWIILRLIYYPFWIL), and 258–278 (YMFNTLLYCLLVLHIYWWVLM). The region spanning 73-287 (RKFKESAWKC…MYRMLVKQIQ (215 aa)) is the TLC domain. Phosphoserine occurs at positions 298 and 300.

In terms of tissue distribution, expressed ubiquitously at low levels. Not observed in pollen.

The protein resides in the endoplasmic reticulum membrane. The catalysed reaction is (4R)-hydroxysphinganine + a fatty acyl-CoA = an N-acyl-(4R)-4-hydroxysphinganine + CoA + H(+). The enzyme catalyses a sphingoid base + tetracosanoyl-CoA = an N-tetracosanoyl-sphingoid base + CoA + H(+). It catalyses the reaction (4R)-hydroxysphinganine + hexadecanoyl-CoA = N-hexadecanoyl-(4R)-hydroxysphinganine + CoA + H(+). It carries out the reaction (4R)-hydroxysphinganine + octadecanoyl-CoA = N-octadecanoyl-(4R)-hydroxysphinganine + CoA + H(+). The catalysed reaction is (4R)-hydroxysphinganine + eicosanoyl-CoA = N-eicosanoyl-(4R)-hydroxysphinganine + CoA + H(+). The enzyme catalyses docosanoyl-CoA + (4R)-hydroxysphinganine = N-docosanoyl-(4R)-hydroxysphinganine + CoA + H(+). It catalyses the reaction hexacosanoyl-CoA + (4R)-hydroxysphinganine = N-hexacosanoyl-(4R)-hydroxysphinganine + CoA + H(+). It carries out the reaction tetracosanoyl-CoA + (4R)-hydroxysphinganine = N-tetracosanoyl-(4R)-hydroxysphinganine + CoA + H(+). The catalysed reaction is tetracosanoyl-CoA + sphing-4-enine = N-tetracosanoyl-sphing-4-enine + CoA + H(+). The enzyme catalyses sphinga-(4E,8Z)-dienine + tetracosanoyl-CoA = N-tetracosanoylsphinga-(4E,8Z)-dienine + CoA + H(+). It catalyses the reaction sphinga-(4E,8E)-dienine + tetracosanoyl-CoA = N-tetracosanoylsphinga-(4E,8E)-dienine + CoA + H(+). It carries out the reaction (4R)-hydroxysphing-(8Z)-enine + tetracosanoyl-CoA = N-tetracosanoyl-(4R)-hydroxysphing-(8Z)-enine + CoA + H(+). The catalysed reaction is (4R)-hydroxysphing-(8E)-enine + tetracosanoyl-CoA = N-tetracosanoyl-(4R)-hydroxysphing-(8E)-enine + CoA + H(+). It participates in sphingolipid metabolism. With respect to regulation, inhibited by the mycotoxin fumonisin B(1), a sphingosine analog mycotoxins produced by pathogenic fungi. Repressed by divalent cation such as magnesium Mg(2+), copper Cu(2+), zinc Zn(2+), manganese Mn(2+), calcium Ca(2+) and cobalt Co(2+). Essential for plant growth, promotes cell division in root meristems. Catalyzes the biosynthesis of ceramide sphingolipids with C(16) to C(28) fatty acids, structural membrane lipids involved in membrane trafficking (e.g. early endosomes) and cell polarity (e.g. polar auxin transport related proteins); active on a broad substrate spectrum, both regarding chain lengths of fatty acids and the sphingoid base, such as long-chain base (LCB) phytosphingosine (t18:0). Mediates resistance to sphinganine-analog mycotoxins (SAMs, e.g. fumonisin B(1)) by restoring the sphingolipid biosynthesis. Could salvage the transport of GPI-anchored proteins from the endoplasmic reticulum to the Golgi apparatus in ceramides-depleted cells after SAM exposure. Contributes to hypoxic conditions tolerance (e.g. submergences), especially in the dark, by promoting the formation of very-long-chain (VLC) ceramide species (22:1, 24:1 and 26:1) and of VLC unsaturated ceramides, which are modulating CTR1-mediated ethylene signaling leading to endoplasmic reticulum (ER)-to-nucleus translocation of EIN2 and EIN3. In Arabidopsis thaliana (Mouse-ear cress), this protein is Ceramide synthase 1 LOH3.